The sequence spans 100 residues: MATMTKKKLISTISQDHKIHPNHVRTVIQNFLDKMTDALVKGDRLEFRDFGVLQVVERKPKVGRNPKNAAVPIHIPARRAVKFTPGKRMKRLIETPNKHS.

The protein belongs to the bacterial histone-like protein family.

In terms of biological role, histone-like DNA-binding protein which is capable of wrapping DNA to stabilize it, and thus to prevent its denaturation under extreme environmental conditions. The polypeptide is Probable DNA-binding protein HU (hup) (Chlamydia pneumoniae (Chlamydophila pneumoniae)).